We begin with the raw amino-acid sequence, 79 residues long: Conotoxin Tr6.3 (79 aa).

A signal peptide spans 1–22 (MKLTCVLIISVLFLTASQLITA). A propeptide spanning residues 23-47 (VYSRDKQQYRAARLRDEMRNLKGAR) is cleaved from the precursor. Intrachain disulfides connect cysteine 49-cysteine 62, cysteine 56-cysteine 67, and cysteine 61-cysteine 77. 4-hydroxyproline is present on residues proline 60 and proline 63.

This sequence belongs to the conotoxin O1 superfamily. As to expression, expressed by the venom duct.

It localises to the secreted. Functionally, ion channel inhibitor that inhibits the increase in intracellular calcium upon depolarization in DRG neurons. In vivo, both intraperitoneal and intracranial injections into mice induce hyperactivity. The sequence is that of Conotoxin Tr6.3 from Conus terebra (Sea snail).